Consider the following 206-residue polypeptide: Large ribosomal subunit protein uL4 (206 aa).

The interval 62-85 (KPWRQKGTGRARQGSTRSPQFRGG) is disordered.

It belongs to the universal ribosomal protein uL4 family. As to quaternary structure, part of the 50S ribosomal subunit.

One of the primary rRNA binding proteins, this protein initially binds near the 5'-end of the 23S rRNA. It is important during the early stages of 50S assembly. It makes multiple contacts with different domains of the 23S rRNA in the assembled 50S subunit and ribosome. Functionally, forms part of the polypeptide exit tunnel. The sequence is that of Large ribosomal subunit protein uL4 from Rhodospirillum centenum (strain ATCC 51521 / SW).